Here is a 213-residue protein sequence, read N- to C-terminus: Ribosomal RNA small subunit methyltransferase G (213 aa).

S-adenosyl-L-methionine-binding positions include Gly-81, Leu-86, 132 to 133 (VE), and Arg-147.

It belongs to the methyltransferase superfamily. RNA methyltransferase RsmG family.

It is found in the cytoplasm. It catalyses the reaction guanosine(527) in 16S rRNA + S-adenosyl-L-methionine = N(7)-methylguanosine(527) in 16S rRNA + S-adenosyl-L-homocysteine. Its function is as follows. Specifically methylates the N7 position of guanine in position 527 of 16S rRNA. In Mannheimia succiniciproducens (strain KCTC 0769BP / MBEL55E), this protein is Ribosomal RNA small subunit methyltransferase G.